Here is a 590-residue protein sequence, read N- to C-terminus: Synaptotagmin-3 (590 aa).

The Vesicular portion of the chain corresponds to 1–54; it reads MSGDYEDDLCRRALILVSDLCARVRDADTNDRCQEFNDRIRGYPRGPDADISVS. A cysteine motif region spans residues 10 to 34; that stretch reads CRRALILVSDLCARVRDADTNDRCQ. The chain crosses the membrane as a helical span at residues 55–75; the sequence is LLSVIVTFCGIVLLGVSLFVS. Residues 76–590 lie on the Cytoplasmic side of the membrane; that stretch reads WKLCWVPWRD…KGLSEKENSE (515 aa). Disordered stretches follow at residues 143 to 220, 234 to 260, and 273 to 295; these read AELL…VTSL, TQQTLTSQPDPSSEERPPALPLPLPGG, and ELYQGTGPGGRRSGGGPGSGEAG. Residues 185-203 show a composition bias toward low complexity; the sequence is SPELPSEGGAGSGLLLLPP. The span at 234–243 shows a compositional bias: polar residues; the sequence is TQQTLTSQPD. A compositionally biased stretch (gly residues) spans 278 to 295; the sequence is TGPGGRRSGGGPGSGEAG. The residue at position 284 (Arg-284) is an Omega-N-methylarginine. C2 domains are found at residues 299–420 and 431–565; these read PCGR…PLWR and DLGE…EHWH. Positions 330, 336, 388, 389, 390, 393, 396, 462, 468, 522, and 524 each coordinate Ca(2+).

It belongs to the synaptotagmin family. Homodimer; disulfide-linked via the cysteine motif. Can also form heterodimers with SYT6, SYT9 and SYT10. Requires Ca(2+) as cofactor. In terms of tissue distribution, expressed in melanocytes.

It is found in the cell membrane. The protein resides in the cytoplasmic vesicle. It localises to the secretory vesicle membrane. Functionally, ca(2+) sensor involved in Ca(2+)-dependent exocytosis of secretory vesicles through Ca(2+) and phospholipid binding to the C2 domain. Ca(2+) induces binding of the C2-domains to phospholipid membranes and to assembled SNARE-complexes; both actions contribute to triggering exocytosis. Plays a role in dendrite formation by melanocytes. This is Synaptotagmin-3 (SYT3) from Homo sapiens (Human).